Here is a 30-residue protein sequence, read N- to C-terminus: Trypsin inhibitor 3 (30 aa).

3 cysteine pairs are disulfide-bonded: cysteine 4/cysteine 21, cysteine 11/cysteine 23, and cysteine 17/cysteine 29.

It belongs to the protease inhibitor I7 (squash-type serine protease inhibitor) family.

It is found in the secreted. Its function is as follows. Inhibits trypsin. The polypeptide is Trypsin inhibitor 3 (Momordica charantia (Bitter gourd)).